Here is a 205-residue protein sequence, read N- to C-terminus: Putative 3-methyladenine DNA glycosylase (205 aa).

Belongs to the DNA glycosylase MPG family.

The polypeptide is Putative 3-methyladenine DNA glycosylase (Clostridium perfringens (strain SM101 / Type A)).